We begin with the raw amino-acid sequence, 378 residues long: Mannitol-1-phosphate 5-dehydrogenase (378 aa).

Residue 4–15 (SVHFGAGNIGRG) participates in NAD(+) binding.

The protein belongs to the mannitol dehydrogenase family.

It catalyses the reaction D-mannitol 1-phosphate + NAD(+) = beta-D-fructose 6-phosphate + NADH + H(+). The protein is Mannitol-1-phosphate 5-dehydrogenase of Streptococcus pneumoniae (strain Hungary19A-6).